Consider the following 65-residue polypeptide: UPF0434 protein BBta_0300 (65 aa).

Belongs to the UPF0434 family.

This Bradyrhizobium sp. (strain BTAi1 / ATCC BAA-1182) protein is UPF0434 protein BBta_0300.